A 157-amino-acid polypeptide reads, in one-letter code: Large ribosomal subunit protein uL22 (157 aa).

Belongs to the universal ribosomal protein uL22 family. Part of the 50S ribosomal subunit.

Its function is as follows. This protein binds specifically to 23S rRNA. It makes multiple contacts with different domains of the 23S rRNA in the assembled 50S subunit and ribosome. The globular domain of the protein is located near the polypeptide exit tunnel on the outside of the subunit, while an extended beta-hairpin is found that lines the wall of the exit tunnel in the center of the 70S ribosome. The polypeptide is Large ribosomal subunit protein uL22 (Staphylothermus marinus (strain ATCC 43588 / DSM 3639 / JCM 9404 / F1)).